Reading from the N-terminus, the 309-residue chain is Glutaminase (309 aa).

Positions 64, 114, 160, 167, 191, 243, and 261 each coordinate substrate.

Belongs to the glutaminase family. Homotetramer.

It carries out the reaction L-glutamine + H2O = L-glutamate + NH4(+). The polypeptide is Glutaminase (Agrobacterium fabrum (strain C58 / ATCC 33970) (Agrobacterium tumefaciens (strain C58))).